The sequence spans 360 residues: Serine/threonine-protein phosphatase 2A activator 2 (360 aa).

The protein belongs to the PTPA-type PPIase family.

The protein localises to the cytoplasm. The enzyme catalyses [protein]-peptidylproline (omega=180) = [protein]-peptidylproline (omega=0). PPIases accelerate the folding of proteins. It catalyzes the cis-trans isomerization of proline imidic peptide bonds in oligopeptides. Acts as a regulatory subunit for PP2A-like phosphatases modulating their activity or substrate specificity, probably by inducing a conformational change in the catalytic subunit, a direct target of the PPIase. Can reactivate inactive phosphatase PP2A-phosphatase methylesterase complexes (PP2Ai) in presence of ATP and Mg(2+) by dissociating the inactive form from the complex. This is Serine/threonine-protein phosphatase 2A activator 2 (RRD2) from Kluyveromyces lactis (strain ATCC 8585 / CBS 2359 / DSM 70799 / NBRC 1267 / NRRL Y-1140 / WM37) (Yeast).